The primary structure comprises 510 residues: GTPase Der (510 aa).

EngA-type G domains follow at residues 4–168 and 222–395; these read PVVA…AEKM and IKIA…ACAT. GTP contacts are provided by residues 10-17, 57-61, 120-123, 228-235, 275-279, and 340-343; these read GRPNVGKS, DTGGI, NKTD, DTAGV, and NKWD. Residues 396 to 480 enclose the KH-like domain; that stretch reads QKMTTSMLTR…PIRLLFQEGN (85 aa).

The protein belongs to the TRAFAC class TrmE-Era-EngA-EngB-Septin-like GTPase superfamily. EngA (Der) GTPase family. In terms of assembly, associates with the 50S ribosomal subunit.

Functionally, GTPase that plays an essential role in the late steps of ribosome biogenesis. The sequence is that of GTPase Der from Pasteurella multocida (strain Pm70).